The primary structure comprises 575 residues: Protein NRD1 (575 aa).

A CID domain is found at 1-153 (MQQDDDFQNF…AIRSKCFAMD (153 aa)). Residues 225 to 282 (SHTSVGTVAPPQAHTITEYGSRRERERERERYNSRRNRSRSPPAPFSQPSTGRKDRYP) are disordered. The segment covering 244–257 (GSRRERERERERYN) has biased composition (basic and acidic residues). Phosphoserine occurs at positions 263, 265, and 271. The RRM domain maps to 339–409 (RTLFIGGVPL…LPLRTRWGVG (71 aa)). Residues 468–575 (VSSKAISQKM…NQQQQQQQQS (108 aa)) are disordered. 2 stretches are compositionally biased toward polar residues: residues 471–482 (KAISQKMPTDSG) and 491–501 (PNKSGSISSIS). 2 stretches are compositionally biased toward low complexity: residues 517-527 (QYVQPMMQQPY) and 549-575 (QQQF…QQQS).

Its subcellular location is the nucleus. In terms of biological role, plays a role in sequence-specific regulation of nuclear pre-mRNA abundance. This Saccharomyces cerevisiae (strain ATCC 204508 / S288c) (Baker's yeast) protein is Protein NRD1 (NRD1).